Here is a 367-residue protein sequence, read N- to C-terminus: Peptide chain release factor 2 (367 aa).

An N5-methylglutamine modification is found at Gln254.

This sequence belongs to the prokaryotic/mitochondrial release factor family. In terms of processing, methylated by PrmC. Methylation increases the termination efficiency of RF2.

Its subcellular location is the cytoplasm. Peptide chain release factor 2 directs the termination of translation in response to the peptide chain termination codons UGA and UAA. The chain is Peptide chain release factor 2 from Leptospira interrogans serogroup Icterohaemorrhagiae serovar copenhageni (strain Fiocruz L1-130).